The following is a 492-amino-acid chain: NADH-quinone oxidoreductase subunit N (492 aa).

Helical transmembrane passes span methionine 13–leucine 33, isoleucine 43–alanine 63, alanine 82–leucine 102, valine 110–serine 132, isoleucine 136–leucine 155, phenylalanine 169–alanine 189, isoleucine 210–leucine 230, proline 245–leucine 265, leucine 272–isoleucine 292, leucine 306–threonine 326, alanine 331–valine 351, alanine 377–phenylalanine 397, glycine 410–leucine 430, and valine 457–tyrosine 477.

This sequence belongs to the complex I subunit 2 family. NDH-1 is composed of 15 different subunits. Subunits NuoA, H, J, K, L, M, N constitute the membrane sector of the complex.

The protein localises to the cell membrane. It carries out the reaction a quinone + NADH + 5 H(+)(in) = a quinol + NAD(+) + 4 H(+)(out). NDH-1 shuttles electrons from NADH, via FMN and iron-sulfur (Fe-S) centers, to quinones in the respiratory chain. The immediate electron acceptor for the enzyme in this species is believed to be a menaquinone. Couples the redox reaction to proton translocation (for every two electrons transferred, four hydrogen ions are translocated across the cytoplasmic membrane), and thus conserves the redox energy in a proton gradient. This chain is NADH-quinone oxidoreductase subunit N, found in Deinococcus radiodurans (strain ATCC 13939 / DSM 20539 / JCM 16871 / CCUG 27074 / LMG 4051 / NBRC 15346 / NCIMB 9279 / VKM B-1422 / R1).